Reading from the N-terminus, the 224-residue chain is MNTSWNDILETEKEKPYYQEMMTYINEARSQGKKIFPKEEDVFTAFSLTPFNNVTVVILGQDPYHGEGQAHGLSFSVLPGVKIPPSLRNMYKELAEDIEGFIPPTHGYLESWAEQGVLLLNTVLTVEESQAHSHAKLGWETFTDSIIEQLNEKKEGIIFLLWGAHAQKKGINIDAMKHSILVAPHPSPLSARRGFFGCQHFSKTNELLREKNLSEINWSSITLD.

Residue Asp-62 is the Proton acceptor of the active site.

The protein belongs to the uracil-DNA glycosylase (UDG) superfamily. UNG family.

Its subcellular location is the cytoplasm. The catalysed reaction is Hydrolyzes single-stranded DNA or mismatched double-stranded DNA and polynucleotides, releasing free uracil.. Functionally, excises uracil residues from the DNA which can arise as a result of misincorporation of dUMP residues by DNA polymerase or due to deamination of cytosine. In Aliivibrio salmonicida (strain LFI1238) (Vibrio salmonicida (strain LFI1238)), this protein is Uracil-DNA glycosylase.